A 473-amino-acid polypeptide reads, in one-letter code: Putative amidase AmiC (473 aa).

Residues Lys-82 and Ser-157 each act as charge relay system in the active site. Ser-181 serves as the catalytic Acyl-ester intermediate.

The protein belongs to the amidase family.

The catalysed reaction is a monocarboxylic acid amide + H2O = a monocarboxylate + NH4(+). This Mycobacterium bovis (strain ATCC BAA-935 / AF2122/97) protein is Putative amidase AmiC (amiC).